The following is a 227-amino-acid chain: MAYPVQLGFQDAASPIMEELLYFHDHTLMIVFLISSLVLYIISLMLTTKLMHTSTMDAQEVETVWTILPAIILILIALPSLRILYMMDEITTPSLTLKTMGHQWYWSYEYTDYEDLSFDSYMVPSSDLKPGELRLLEVDNRIVLPTELSIRMLISSEDVLHSWAVPSLGVKTDAIPGRLNQATLMTSRPGIYYGQCSEICGANHSFMPIVLELVPLKHFEEWLLSMF.

Residues 1-14 lie on the Mitochondrial intermembrane side of the membrane; it reads MAYPVQLGFQDAAS. A helical transmembrane segment spans residues 15–45; the sequence is PIMEELLYFHDHTLMIVFLISSLVLYIISLM. Residues 46-59 lie on the Mitochondrial matrix side of the membrane; the sequence is LTTKLMHTSTMDAQ. The helical transmembrane segment at 60 to 87 threads the bilayer; it reads EVETVWTILPAIILILIALPSLRILYMM. Over 88–227 the chain is Mitochondrial intermembrane; it reads DEITTPSLTL…HFEEWLLSMF (140 aa). His161, Cys196, Glu198, Cys200, His204, and Met207 together coordinate Cu cation. Residue Glu198 participates in Mg(2+) binding.

It belongs to the cytochrome c oxidase subunit 2 family. As to quaternary structure, component of the cytochrome c oxidase (complex IV, CIV), a multisubunit enzyme composed of 14 subunits. The complex is composed of a catalytic core of 3 subunits MT-CO1, MT-CO2 and MT-CO3, encoded in the mitochondrial DNA, and 11 supernumerary subunits COX4I, COX5A, COX5B, COX6A, COX6B, COX6C, COX7A, COX7B, COX7C, COX8 and NDUFA4, which are encoded in the nuclear genome. The complex exists as a monomer or a dimer and forms supercomplexes (SCs) in the inner mitochondrial membrane with NADH-ubiquinone oxidoreductase (complex I, CI) and ubiquinol-cytochrome c oxidoreductase (cytochrome b-c1 complex, complex III, CIII), resulting in different assemblies (supercomplex SCI(1)III(2)IV(1) and megacomplex MCI(2)III(2)IV(2)). Found in a complex with TMEM177, COA6, COX18, COX20, SCO1 and SCO2. Interacts with TMEM177 in a COX20-dependent manner. Interacts with COX20. Interacts with COX16. Cu cation is required as a cofactor.

The protein resides in the mitochondrion inner membrane. The enzyme catalyses 4 Fe(II)-[cytochrome c] + O2 + 8 H(+)(in) = 4 Fe(III)-[cytochrome c] + 2 H2O + 4 H(+)(out). In terms of biological role, component of the cytochrome c oxidase, the last enzyme in the mitochondrial electron transport chain which drives oxidative phosphorylation. The respiratory chain contains 3 multisubunit complexes succinate dehydrogenase (complex II, CII), ubiquinol-cytochrome c oxidoreductase (cytochrome b-c1 complex, complex III, CIII) and cytochrome c oxidase (complex IV, CIV), that cooperate to transfer electrons derived from NADH and succinate to molecular oxygen, creating an electrochemical gradient over the inner membrane that drives transmembrane transport and the ATP synthase. Cytochrome c oxidase is the component of the respiratory chain that catalyzes the reduction of oxygen to water. Electrons originating from reduced cytochrome c in the intermembrane space (IMS) are transferred via the dinuclear copper A center (CU(A)) of subunit 2 and heme A of subunit 1 to the active site in subunit 1, a binuclear center (BNC) formed by heme A3 and copper B (CU(B)). The BNC reduces molecular oxygen to 2 water molecules using 4 electrons from cytochrome c in the IMS and 4 protons from the mitochondrial matrix. This is Cytochrome c oxidase subunit 2 (MT-CO2) from Propithecus tattersalli (Golden-crowned Sifaka).